The chain runs to 287 residues: Small ribosomal subunit biogenesis GTPase RsgA (287 aa).

Positions 61-218 constitute a CP-type G domain; that stretch reads ISQLKRPAVA…MVDTPGFSSL (158 aa). GTP contacts are provided by residues 110 to 113 and 161 to 169; these read NKLD and GPSGVGKST. Residues Cys242, Cys247, His249, and Cys255 each coordinate Zn(2+).

Belongs to the TRAFAC class YlqF/YawG GTPase family. RsgA subfamily. Monomer. Associates with 30S ribosomal subunit, binds 16S rRNA. Zn(2+) serves as cofactor.

The protein localises to the cytoplasm. In terms of biological role, one of several proteins that assist in the late maturation steps of the functional core of the 30S ribosomal subunit. Helps release RbfA from mature subunits. May play a role in the assembly of ribosomal proteins into the subunit. Circularly permuted GTPase that catalyzes slow GTP hydrolysis, GTPase activity is stimulated by the 30S ribosomal subunit. This is Small ribosomal subunit biogenesis GTPase RsgA from Clostridium kluyveri (strain NBRC 12016).